Consider the following 178-residue polypeptide: Cytidylate kinase (178 aa).

Residue 7 to 15 (GLPGTGTTT) participates in ATP binding.

It belongs to the cytidylate kinase family. Type 2 subfamily.

Its subcellular location is the cytoplasm. It carries out the reaction CMP + ATP = CDP + ADP. It catalyses the reaction dCMP + ATP = dCDP + ADP. The sequence is that of Cytidylate kinase from Methanococcus maripaludis (strain C7 / ATCC BAA-1331).